Reading from the N-terminus, the 63-residue chain is uncharacterized protein (63 aa).

The protein localises to the mitochondrion. This is an uncharacterized protein from Marchantia polymorpha (Common liverwort).